Here is a 418-residue protein sequence, read N- to C-terminus: Putative ion-transport protein YfeO (418 aa).

A run of 12 helical transmembrane segments spans residues 10 to 30 (LLLS…LIVV), 54 to 74 (DSPF…GLVI), 99 to 119 (ALPG…SLGP), 120 to 140 (EHPI…RLLP), 149 to 169 (ILAS…AALI), 186 to 206 (LFAP…FFHP), 223 to 243 (ILSG…AVWC), 258 to 278 (VLML…AGPV), 300 to 320 (DYFL…ASGF), 322 to 342 (GGRI…LHEH), 343 to 363 (VPAV…VLVV), and 371 to 391 (LFMA…CIVM).

This sequence belongs to the chloride channel (TC 2.A.49) family.

It is found in the cell membrane. The sequence is that of Putative ion-transport protein YfeO from Escherichia coli O7:K1 (strain IAI39 / ExPEC).